The chain runs to 628 residues: Eukaryotic peptide chain release factor GTP-binding subunit ERF3B (628 aa).

Residues Met1–Ser10 show a composition bias toward low complexity. 3 disordered regions span residues Met1–Leu44, Ser71–Ser124, and Leu146–Ser191. A tr-type G domain is found at Lys201 to Arg425. The segment at Gly210 to Ser217 is G1. Asp213–Thr218 contributes to the GTP binding site. The interval Gly266–Glu270 is G2. Residues Asp287 to Gly290 form a G3 region. GTP contacts are provided by residues Asn349–Asp352 and Ser391–Leu393. The tract at residues Asn349 to Asp352 is G4. The tract at residues Ser391–Leu393 is G5.

It belongs to the TRAFAC class translation factor GTPase superfamily. Classic translation factor GTPase family. ERF3 subfamily. In terms of assembly, component of the eRF1-eRF3-GTP ternary complex, composed of ETF1/ERF1 and ERF3 (GSPT1/ERF3A or GSPT2/ERF3B) and GTP. Component of the transient SURF (SMG1-UPF1-eRF1-eRF3) complex. Interacts with UPF1 and PABPC1.

It is found in the cytoplasm. It catalyses the reaction GTP + H2O = GDP + phosphate + H(+). Functionally, GTPase component of the eRF1-eRF3-GTP ternary complex, a ternary complex that mediates translation termination in response to the termination codons UAA, UAG and UGA. GSPT2/ERF3B mediates ETF1/ERF1 delivery to stop codons: The eRF1-eRF3-GTP complex binds to a stop codon in the ribosomal A-site. GTP hydrolysis by GSPT2/ERF3B induces a conformational change that leads to its dissociation, permitting ETF1/ERF1 to accommodate fully in the A-site. Component of the transient SURF complex which recruits UPF1 to stalled ribosomes in the context of nonsense-mediated decay (NMD) of mRNAs containing premature stop codons. The polypeptide is Eukaryotic peptide chain release factor GTP-binding subunit ERF3B (GSPT2) (Pongo abelii (Sumatran orangutan)).